The sequence spans 154 residues: OCIA domain-containing protein 2 (154 aa).

The disordered stretch occupies residues Met-1–Gln-22. One can recognise an OCIA domain in the interval Met-1–Ala-120. Lys-41 is subject to N6-acetyllysine.

Interacts (via OCIA domain) with OCIAD1/ASRIJ and STAT3.

Its subcellular location is the endosome. It is found in the mitochondrion. The protein resides in the mitochondrion inner membrane. Its function is as follows. Has an essential role in the assembly of mitochondrial respiratory chain complex III. Is also required for STAT3 activation and plays a role in cell migration. This is OCIA domain-containing protein 2 (OCIAD2) from Homo sapiens (Human).